The chain runs to 590 residues: Arginine--tRNA ligase (590 aa).

The short motif at 130-140 (ANPTGPMHVGH) is the 'HIGH' region element.

The protein belongs to the class-I aminoacyl-tRNA synthetase family. As to quaternary structure, monomer.

The protein localises to the cytoplasm. The catalysed reaction is tRNA(Arg) + L-arginine + ATP = L-arginyl-tRNA(Arg) + AMP + diphosphate. This chain is Arginine--tRNA ligase, found in Methylobacterium nodulans (strain LMG 21967 / CNCM I-2342 / ORS 2060).